The primary structure comprises 106 residues: ATP-dependent Clp protease adapter protein ClpS (106 aa).

The protein belongs to the ClpS family. In terms of assembly, binds to the N-terminal domain of the chaperone ClpA.

In terms of biological role, involved in the modulation of the specificity of the ClpAP-mediated ATP-dependent protein degradation. In Erwinia tasmaniensis (strain DSM 17950 / CFBP 7177 / CIP 109463 / NCPPB 4357 / Et1/99), this protein is ATP-dependent Clp protease adapter protein ClpS.